We begin with the raw amino-acid sequence, 404 residues long: Ubiquitin-like modifier-activating enzyme 5 (404 aa).

S45 carries the phosphoserine modification. G83, D104, K127, N150, and N184 together coordinate ATP. C226 and C229 together coordinate Zn(2+). The active-site Glycyl thioester intermediate is the C250. C303 and C308 together coordinate Zn(2+). Positions 334-346 (IIHEDNEWGIELV) match the UFM1-interacting sequence (UIS) motif. The segment at 347 to 377 (SEVSEEELKNSSGPVPDLPEGITVAYTIPKK) is linker. A phosphoserine mark is found at S358 and S393. Residues 389–404 (DSGESLEDLMAKMKNM) carry the UFC1-binding sequence (UFC) motif.

This sequence belongs to the ubiquitin-activating E1 family. UBA5 subfamily. In terms of assembly, homodimer; homodimerization is required for UFM1 activation. Interacts (via UIS motif) with UFM1; binds UFM1 via a trans-binding mechanism in which UFM1 interacts with distinct sites in both subunits of the UBA5 homodimer. Interacts (via C-terminus) with UFC1. Interacts (via UIS motif) with GABARAPL2 and, with lower affinity, with GABARAP and GABARAPL1.

The protein localises to the cytoplasm. It is found in the nucleus. The protein resides in the endoplasmic reticulum membrane. It localises to the golgi apparatus. In terms of biological role, E1-like enzyme which specifically catalyzes the first step in ufmylation. Activates UFM1 by first adenylating its C-terminal glycine residue with ATP, and thereafter linking this residue to the side chain of a cysteine residue in E1, yielding a UFM1-E1 thioester and free AMP. Activates UFM1 via a trans-binding mechanism, in which UFM1 interacts with distinct sites in both subunits of the UBA5 homodimer. Trans-binding also promotes stabilization of the UBA5 homodimer, and enhances ATP-binding. Transfer of UFM1 from UBA5 to the E2-like enzyme UFC1 also takes place using a trans mechanism. Ufmylation plays a key role in various processes, such as ribosome recycling, response to DNA damage, interferon response or reticulophagy (also called ER-phagy). Ufmylation is essential for erythroid differentiation of both megakaryocytes and erythrocytes. This is Ubiquitin-like modifier-activating enzyme 5 from Pongo abelii (Sumatran orangutan).